Consider the following 214-residue polypeptide: Putative nickel/cobalt efflux system MJ1092 (214 aa).

Helical transmembrane passes span 2–22, 46–66, 79–99, 116–136, 149–169, and 188–208; these read VMIM…LHAL, ILLG…LGIL, VHDM…IWII, VITL…AVLL, IYVA…AVAF, and LPLI…AHPI.

Belongs to the NiCoT transporter (TC 2.A.52) family.

The protein localises to the cell membrane. Functionally, efflux system for nickel and cobalt. The chain is Putative nickel/cobalt efflux system MJ1092 from Methanocaldococcus jannaschii (strain ATCC 43067 / DSM 2661 / JAL-1 / JCM 10045 / NBRC 100440) (Methanococcus jannaschii).